The sequence spans 305 residues: tRNA dimethylallyltransferase (305 aa).

8–15 (GPTGTGKS) contributes to the ATP binding site. 10-15 (TGTGKS) is a binding site for substrate.

It belongs to the IPP transferase family. Monomer. Mg(2+) serves as cofactor.

It carries out the reaction adenosine(37) in tRNA + dimethylallyl diphosphate = N(6)-dimethylallyladenosine(37) in tRNA + diphosphate. Functionally, catalyzes the transfer of a dimethylallyl group onto the adenine at position 37 in tRNAs that read codons beginning with uridine, leading to the formation of N6-(dimethylallyl)adenosine (i(6)A). The sequence is that of tRNA dimethylallyltransferase from Mycobacterium sp. (strain JLS).